A 146-amino-acid polypeptide reads, in one-letter code: UPF0260 protein Spea_2441 (146 aa).

Belongs to the UPF0260 family.

In Shewanella pealeana (strain ATCC 700345 / ANG-SQ1), this protein is UPF0260 protein Spea_2441.